We begin with the raw amino-acid sequence, 410 residues long: MGSKKRSPQHPAAAAPPPAVGGGGGGEVSGDGGASTANGPVVPKPSEVAPFLTKVYDMVSDPATDNVISWAEGGGSFVIWDSHAFERDLHRHFKHSNFTSFIRQLNTYGFRKVHPDRWEWANEGFIMGQKHLLKTIKRRKKSSQESPSEIQKAPVKTAPGTENIEIGKYGGLEKEVETLKRDKALLMQQLVDLRHYQQTSNLEVQNLIERLQVMEQNQQQMMALLAIVVQNPSFLNQLVQQQQQQRRSNWWSPDGSKKRRFHALEQGPVTDQETSGRGAHIVEYLPPVPETSGQVNPVEGAICSANSQPVPSPAVATPMDMQTSNVADTLGSSEEPFADNSTLHEWDDNDMQLLFDDNLDPILPPFENDGQMGPPLSVQDYDFPQLEQDCLMEAQYNSNNPQYADVITEA.

The segment at 1 to 44 (MGSKKRSPQHPAAAAPPPAVGGGGGGEVSGDGGASTANGPVVPK) is disordered. A compositionally biased stretch (gly residues) spans 20–33 (VGGGGGGEVSGDGG). Residues 171-246 (GLEKEVETLK…QLVQQQQQQR (76 aa)) adopt a coiled-coil conformation. Positions 179 to 229 (LKRDKALLMQQLVDLRHYQQTSNLEVQNLIERLQVMEQNQQQMMALLAIVV) are hydrophobic repeat HR-A/B. A Nuclear localization signal motif is present at residues 256–260 (SKKRR). Residues 279-290 (AHIVEYLPPVPE) carry the Nuclear export signal motif.

It belongs to the HSF family. Class A subfamily. As to quaternary structure, homotrimer. In terms of processing, exhibits temperature-dependent phosphorylation.

It localises to the cytoplasm. It is found in the nucleus. Functionally, transcriptional regulator that specifically binds DNA of heat shock promoter elements (HSE). The chain is Heat stress transcription factor A-9 (HSFA9) from Oryza sativa subsp. japonica (Rice).